The chain runs to 203 residues: uncharacterized protein (203 aa).

3 residues coordinate Fe cation: H34, E97, and H172.

Belongs to the hemerythrin family.

Its subcellular location is the mitochondrion. This is an uncharacterized protein from Schizosaccharomyces pombe (strain 972 / ATCC 24843) (Fission yeast).